A 422-amino-acid polypeptide reads, in one-letter code: Serine/threonine-protein kinase H1 homolog (422 aa).

Positions 35-80 (FIKYDGGGEKTGSPSPQGQSQAVAKVSQSPPPANDQPEPADSHRKK) are disordered. The span at 46 to 62 (GSPSPQGQSQAVAKVSQ) shows a compositional bias: polar residues. The region spanning 96–353 (YDIKALIGRG…AGQALKHPWI (258 aa)) is the Protein kinase domain. Residues 102-110 (IGRGSFSRV) and K125 each bind ATP. The active-site Proton acceptor is D216. Positions 376–422 (RASSRCHSTKSSQSTRSSRSTKSSKARRLREKELRELNRRYQQQCNG) are disordered. The segment covering 384–396 (TKSSQSTRSSRST) has biased composition (low complexity). The segment covering 405–414 (REKELRELNR) has biased composition (basic and acidic residues).

It belongs to the protein kinase superfamily. CAMK Ser/Thr protein kinase family.

It carries out the reaction L-seryl-[protein] + ATP = O-phospho-L-seryl-[protein] + ADP + H(+). The catalysed reaction is L-threonyl-[protein] + ATP = O-phospho-L-threonyl-[protein] + ADP + H(+). In Danio rerio (Zebrafish), this protein is Serine/threonine-protein kinase H1 homolog (pskh1).